A 54-amino-acid polypeptide reads, in one-letter code: uncharacterized protein (54 aa).

Residues 1–54 (MWTLKARKEHTGISGKPTARTDRHGSTRSGDSELQASARRFSRLPDRCGAQGVT) are disordered.

This is an uncharacterized protein from Mycobacterium tuberculosis (strain ATCC 25618 / H37Rv).